The chain runs to 154 residues: MWSLKSTLCIALLVTYSVAQDSTTVDTTAATTATGGTTATGGTTATGGTTVSGATTAASGATTASTCADDPNTDCTQYTSLCSNAKYTPLLQQFCPKTCGFCGGGSTAAPVQCVDSSTNCANWEKNGFCSSTFYDCANKKQYCAKTCKLCTTTC.

Residues M1 to A19 form the signal peptide. 2 consecutive ShKT domains span residues C67–C102 and C113–C150. 6 disulfides stabilise this stretch: C67-C102, C75-C95, C82-C99, C113-C150, C120-C143, and C129-C147.

This is an uncharacterized protein from Caenorhabditis elegans.